Reading from the N-terminus, the 195-residue chain is MAFVLSLLMALVLVSYGPGGSLGCYLSRKLMLDARENLRLLDRMNRLSPHSCLQDRKDFGLPQEMVEGDQLQKDQAFSVLYEMLQQSFNVFHTERSSAAWNTTLLEQLCTGLQQQLDHLDTCRGPVMGEKDSELGKMDPIVTVKKYFQGIHDYLQEKGYSDCAWEIVRVEMMRALTSSTTLQKRLTKTGGDLNSP.

An N-terminal signal peptide occupies residues 1–23 (MAFVLSLLMALVLVSYGPGGSLG). Intrachain disulfides connect Cys24–Cys122 and Cys52–Cys162. N-linked (GlcNAc...) asparagine glycosylation is present at Asn101.

This sequence belongs to the alpha/beta interferon family. IFN-alphaII subfamily. In terms of tissue distribution, constitutively and exclusively expressed in the mononuclear cells of the extraembryonic trophectoderm.

The protein resides in the secreted. In terms of biological role, paracrine hormone primarily responsible for maternal recognition of pregnancy. Interacts with endometrial receptors, probably type I interferon receptors, and blocks estrogen receptor expression, preventing the estrogen-induced increase in oxytocin receptor expression in the endometrium. This results in the suppression of the pulsatile endometrial release of the luteolytic hormone prostaglandin F2-alpha, hindering the regression of the corpus luteum (luteolysis) and therefore a return to ovarian cyclicity. This, and a possible direct effect of IFN-tau on prostaglandin synthesis, leads in turn to continued ovarian progesterone secretion, which stimulates the secretion by the endometrium of the nutrients required for the growth of the conceptus. In summary, displays particularly high antiviral and antiproliferative potency concurrently with particular weak cytotoxicity, high antiluteolytic activity and immunomodulatory properties. In contrast with other IFNs, IFN-tau is not virally inducible. The sequence is that of Interferon tau-6 (IFNT6) from Ovis aries (Sheep).